A 180-amino-acid chain; its full sequence is ATP-dependent protease subunit HslV (180 aa).

Threonine 5 is an active-site residue. Na(+)-binding residues include glycine 165, cysteine 168, and threonine 171.

It belongs to the peptidase T1B family. HslV subfamily. A double ring-shaped homohexamer of HslV is capped on each side by a ring-shaped HslU homohexamer. The assembly of the HslU/HslV complex is dependent on binding of ATP.

Its subcellular location is the cytoplasm. It carries out the reaction ATP-dependent cleavage of peptide bonds with broad specificity.. Its activity is regulated as follows. Allosterically activated by HslU binding. Protease subunit of a proteasome-like degradation complex believed to be a general protein degrading machinery. The polypeptide is ATP-dependent protease subunit HslV (Helicobacter pylori (strain P12)).